The sequence spans 311 residues: Olfactory receptor 10D1B (311 aa).

Residues 1–24 are Extracellular-facing; the sequence is MKNLSVVTQFILLGIPHTEGVETM. Residues 25-45 form a helical membrane-spanning segment; sequence LFVLFFSFYIFTLVGNLLILL. Residues 46–54 are Cytoplasmic-facing; the sequence is AIVSSSRLH. Residues 55–75 form a helical membrane-spanning segment; that stretch reads TPMYFFLCQLSVCDIFFPSVS. Over 76 to 95 the chain is Extracellular; the sequence is SPKMLFYLSGNTPAISYAGC. Cys-95 and Cys-187 are joined by a disulfide. The chain crosses the membrane as a helical span at residues 96–116; that stretch reads VSQLFFYHFLGGTECFLYTVM. Residues 117–137 lie on the Cytoplasmic side of the membrane; sequence AYDRFVAICYPLRYSVIMSHR. A helical membrane pass occupies residues 138–158; sequence ICAFLAMGTAVFGCIHSTFLT. At 159–192 the chain is on the extracellular side; that stretch reads TLTFQLPYCGPKDVNYYFCDIPVVMKLACADTST. The helical transmembrane segment at 193 to 213 threads the bilayer; it reads LEMVGFISVGLMPLSCFFFIL. The Cytoplasmic segment spans residues 214-237; sequence TSYSCIVRSILQIRSTEGRHRAFS. The chain crosses the membrane as a helical span at residues 238–258; the sequence is TCSAHFTAILLFYMPVIFIYL. Residues 259–271 are Extracellular-facing; that stretch reads RPTPSPWLDATVQ. The chain crosses the membrane as a helical span at residues 272–288; the sequence is ILNNLVTPMLNPLIYSL. Residues 289-311 lie on the Cytoplasmic side of the membrane; the sequence is RNKEVKSSLWTVLHLLCFLPKHL.

The protein belongs to the G-protein coupled receptor 1 family.

Its subcellular location is the cell membrane. In terms of biological role, odorant receptor. The protein is Olfactory receptor 10D1B of Mus musculus (Mouse).